We begin with the raw amino-acid sequence, 338 residues long: MASDAEWVLESVLGFVSGPVWTVPVLEFMEHKCSVFDDDEENKLSYTDIHNEYKELVETLLTQHLNEVGISEEQFQEACAAPLAHSATLKNILQPVLAVEDFKIFKAMMVQKNIELQLQAIRIIQERNGVLPDCLQHGSDIISDLEQEEMKLVSEALRLSKEEYEREQLRRSAKELNCTFGEHSKTKQSNGSERTPSNTELPDQSHEIEQQPVKMQESPYEEASMKLKEMSNTEAAEAWLEQARKEAGILSSVTNLSQAEKEQLQKRAEYLRRRREELLAKKQESKKMAHNSEVHEEKATCSKQEMTEEEKKSLQRRKQLAEKLKEEVILCEKSGTAS.

The stretch at Ile142–Thr179 forms a coiled coil. Disordered regions lie at residues Glu175–Tyr220 and Lys281–Leu314. The span at Lys187 to Pro202 shows a compositional bias: polar residues. Residues Asn255 to Leu330 are a coiled coil.

It belongs to the CFAP36 family.

It is found in the nucleus. The protein resides in the cytoplasm. It localises to the cell projection. The protein localises to the cilium. Its subcellular location is the flagellum. The protein is Cilia- and flagella-associated protein 36 of Xenopus laevis (African clawed frog).